We begin with the raw amino-acid sequence, 269 residues long: MMVSPPQEDTVFNTDSDPVYEQATDDMTFNDTTTDGNGQESVPLEALTVVEIEKTSKGFGFNIVGGTDNPHFVGDIGIYVSSVNSESKSYGVVRTGDKILSFDGIDMTYKTHDEAVEVFRSVKIGHVAKMLIDREYLHLQEDRTQTPTASVSITPQVTPQTRSTQNNTDTPKSMSHSESKSRLTSHGLSAVIERIRGKVYEEEDAQSVTSYAPSTHSIIDDVPRTPRKPLSLLDPRNNSWLTEALYVSIGLGALTISGYLAYRFIRGRR.

A PDZ domain is found at 49–121 (VVEIEKTSKG…HDEAVEVFRS (73 aa)). The disordered stretch occupies residues 143–185 (RTQTPTASVSITPQVTPQTRSTQNNTDTPKSMSHSESKSRLTS). Residues 145 to 174 (QTPTASVSITPQVTPQTRSTQNNTDTPKSM) show a composition bias toward polar residues. A helical membrane pass occupies residues 240 to 262 (WLTEALYVSIGLGALTISGYLAY).

It localises to the membrane. Functionally, plays a role in the regulation of lifespan in a partially daf-16-mediated manner, and may be involved in regulating the levels of reactive oxygen species production in response to heat stress. This is Mitochondrial scaffolding protein 1 from Caenorhabditis elegans.